The chain runs to 289 residues: ATP synthase gamma chain (289 aa).

Belongs to the ATPase gamma chain family. As to quaternary structure, F-type ATPases have 2 components, CF(1) - the catalytic core - and CF(0) - the membrane proton channel. CF(1) has five subunits: alpha(3), beta(3), gamma(1), delta(1), epsilon(1). CF(0) has three main subunits: a, b and c.

It is found in the cell inner membrane. In terms of biological role, produces ATP from ADP in the presence of a proton gradient across the membrane. The gamma chain is believed to be important in regulating ATPase activity and the flow of protons through the CF(0) complex. The protein is ATP synthase gamma chain of Erwinia tasmaniensis (strain DSM 17950 / CFBP 7177 / CIP 109463 / NCPPB 4357 / Et1/99).